A 640-amino-acid polypeptide reads, in one-letter code: Biosynthetic arginine decarboxylase (640 aa).

K105 is modified (N6-(pyridoxal phosphate)lysine). 290–300 (FDVGGGLAIDY) is a binding site for substrate.

The protein belongs to the Orn/Lys/Arg decarboxylase class-II family. SpeA subfamily. Requires Mg(2+) as cofactor. The cofactor is pyridoxal 5'-phosphate.

It catalyses the reaction L-arginine + H(+) = agmatine + CO2. In terms of biological role, catalyzes the biosynthesis of agmatine from arginine. In Vibrio vulnificus (strain CMCP6), this protein is Biosynthetic arginine decarboxylase.